The following is a 247-amino-acid chain: UDP-2,3-diacylglucosamine hydrolase (247 aa).

Mn(2+) is bound by residues Asp8, His10, Asp41, Asn79, and His114. 79-80 (NR) contributes to the substrate binding site. The substrate site is built by Asp122, Ser160, Asp171, Arg174, and His202. Residues His202 and His204 each coordinate Mn(2+).

The protein belongs to the LpxH family. Mn(2+) serves as cofactor.

It is found in the cell inner membrane. The enzyme catalyses UDP-2-N,3-O-bis[(3R)-3-hydroxytetradecanoyl]-alpha-D-glucosamine + H2O = 2-N,3-O-bis[(3R)-3-hydroxytetradecanoyl]-alpha-D-glucosaminyl 1-phosphate + UMP + 2 H(+). Its pathway is glycolipid biosynthesis; lipid IV(A) biosynthesis; lipid IV(A) from (3R)-3-hydroxytetradecanoyl-[acyl-carrier-protein] and UDP-N-acetyl-alpha-D-glucosamine: step 4/6. In terms of biological role, hydrolyzes the pyrophosphate bond of UDP-2,3-diacylglucosamine to yield 2,3-diacylglucosamine 1-phosphate (lipid X) and UMP by catalyzing the attack of water at the alpha-P atom. Involved in the biosynthesis of lipid A, a phosphorylated glycolipid that anchors the lipopolysaccharide to the outer membrane of the cell. The chain is UDP-2,3-diacylglucosamine hydrolase from Xanthomonas axonopodis pv. citri (strain 306).